The primary structure comprises 485 residues: Tektin-5 (485 aa).

Coiled coils occupy residues 114 to 185 (RLTD…EVNC), 225 to 247 (QEQMRKLAQRIDIQMRDNRDAQH), 307 to 385 (QNMR…MAKE), and 421 to 444 (TIDDTLQTLKLRLRETQDTLQLLV).

Belongs to the tektin family. In terms of assembly, microtubule inner protein component of sperm flagellar doublet microtubules. Interacts with TEKT3. Post-translationally, ubiquitinated, leading to its degradation. Deubiquitinated by USP16, promoting its stability.

It is found in the cytoplasm. Its subcellular location is the cytoskeleton. The protein resides in the flagellum axoneme. In terms of biological role, sperm-specific microtubule inner protein (MIP) part of the dynein-decorated doublet microtubules (DMTs) in flagellar axoneme. Forms an extensive interaction network in different conformations that reinforces the helix bundle composed by other tektin proteins (TEKT1 to TEKT4) and MIPs to anchor the tektin bundle onto the tubulin wall of A-tubule of the sperm flagellum. The sequence is that of Tektin-5 (TEKT5) from Homo sapiens (Human).